The chain runs to 83 residues: Cell division topological specificity factor (83 aa).

Belongs to the MinE family.

Functionally, prevents the cell division inhibition by proteins MinC and MinD at internal division sites while permitting inhibition at polar sites. This ensures cell division at the proper site by restricting the formation of a division septum at the midpoint of the long axis of the cell. This Bordetella parapertussis (strain 12822 / ATCC BAA-587 / NCTC 13253) protein is Cell division topological specificity factor.